A 195-amino-acid polypeptide reads, in one-letter code: NADH-quinone oxidoreductase subunit B (195 aa).

Residues Cys74, Cys75, Cys139, and Cys169 each coordinate [4Fe-4S] cluster.

The protein belongs to the complex I 20 kDa subunit family. As to quaternary structure, NDH-1 is composed of 14 different subunits. Subunits NuoB, C, D, E, F, and G constitute the peripheral sector of the complex. [4Fe-4S] cluster serves as cofactor.

It is found in the cell inner membrane. The catalysed reaction is a quinone + NADH + 5 H(+)(in) = a quinol + NAD(+) + 4 H(+)(out). Functionally, NDH-1 shuttles electrons from NADH, via FMN and iron-sulfur (Fe-S) centers, to quinones in the respiratory chain. The immediate electron acceptor for the enzyme in this species is believed to be ubiquinone. Couples the redox reaction to proton translocation (for every two electrons transferred, four hydrogen ions are translocated across the cytoplasmic membrane), and thus conserves the redox energy in a proton gradient. This chain is NADH-quinone oxidoreductase subunit B, found in Methylobacterium sp. (strain 4-46).